Here is a 258-residue protein sequence, read N- to C-terminus: Type III pantothenate kinase (258 aa).

An ATP-binding site is contributed by Asp-6–Val-13. Substrate is bound by residues Tyr-100 and Gly-107–Arg-110. Asp-109 functions as the Proton acceptor in the catalytic mechanism. Asp-129 contacts K(+). Thr-132 provides a ligand contact to ATP. Thr-184 lines the substrate pocket.

Belongs to the type III pantothenate kinase family. As to quaternary structure, homodimer. NH4(+) is required as a cofactor. Requires K(+) as cofactor.

Its subcellular location is the cytoplasm. It catalyses the reaction (R)-pantothenate + ATP = (R)-4'-phosphopantothenate + ADP + H(+). The protein operates within cofactor biosynthesis; coenzyme A biosynthesis; CoA from (R)-pantothenate: step 1/5. Its function is as follows. Catalyzes the phosphorylation of pantothenate (Pan), the first step in CoA biosynthesis. In Bacillus licheniformis (strain ATCC 14580 / DSM 13 / JCM 2505 / CCUG 7422 / NBRC 12200 / NCIMB 9375 / NCTC 10341 / NRRL NRS-1264 / Gibson 46), this protein is Type III pantothenate kinase.